The primary structure comprises 545 residues: Hyaluronidase PH-20 (545 aa).

The signal sequence occupies residues 1–35; sequence MGVLKFKHIFFGSAVELSGVFQIVFIFLLIPCCLT. Cystine bridges form between Cys-60-Cys-355 and Cys-224-Cys-239. A glycan (N-linked (GlcNAc...) asparagine) is linked at Asn-82. Glu-148 acts as the Proton donor in catalysis. Asn-180 carries N-linked (GlcNAc...) asparagine glycosylation. N-linked (GlcNAc...) asparagine glycosylation is present at Asn-372. Intrachain disulfides connect Cys-380/Cys-391, Cys-385/Cys-439, and Cys-441/Cys-468.

Belongs to the glycosyl hydrolase 56 family. As to expression, testis.

It localises to the cell membrane. The enzyme catalyses Random hydrolysis of (1-&gt;4)-linkages between N-acetyl-beta-D-glucosamine and D-glucuronate residues in hyaluronate.. Its function is as follows. Involved in sperm-egg adhesion. Upon fertilization sperm must first penetrate a layer of cumulus cells that surrounds the egg before reaching the zona pellucida. The cumulus cells are embedded in a matrix containing hyaluronic acid which is formed prior to ovulation. This protein aids in penetrating the layer of cumulus cells by digesting hyaluronic acid. In Oryctolagus cuniculus (Rabbit), this protein is Hyaluronidase PH-20 (SPAM1).